A 481-amino-acid chain; its full sequence is UDP-N-acetylmuramoyl-L-alanyl-D-glutamate--L-lysine ligase (481 aa).

Ser42 contacts UDP-N-acetyl-alpha-D-muramoyl-L-alanyl-D-glutamate. 118–124 provides a ligand contact to ATP; it reads GTKGKTT. UDP-N-acetyl-alpha-D-muramoyl-L-alanyl-D-glutamate is bound by residues Gln158, 160–161, Ser187, and Arg195; that span reads TT. At Lys229 the chain carries N6-carboxylysine. The short motif at 404 to 407 is the L-lysine recognition motif element; that stretch reads DDPN.

The protein belongs to the MurCDEF family. MurE subfamily. In terms of processing, carboxylation is probably crucial for Mg(2+) binding and, consequently, for the gamma-phosphate positioning of ATP.

It localises to the cytoplasm. It carries out the reaction UDP-N-acetyl-alpha-D-muramoyl-L-alanyl-D-glutamate + L-lysine + ATP = UDP-N-acetyl-alpha-D-muramoyl-L-alanyl-gamma-D-glutamyl-L-lysine + ADP + phosphate + H(+). It functions in the pathway cell wall biogenesis; peptidoglycan biosynthesis. Catalyzes the addition of L-lysine to the nucleotide precursor UDP-N-acetylmuramoyl-L-alanyl-D-glutamate (UMAG) in the biosynthesis of bacterial cell-wall peptidoglycan. In Streptococcus pyogenes serotype M3 (strain SSI-1), this protein is UDP-N-acetylmuramoyl-L-alanyl-D-glutamate--L-lysine ligase.